We begin with the raw amino-acid sequence, 257 residues long: 5'-nucleotidase SurE (257 aa).

Asp-8, Asp-9, Ser-39, and Asn-87 together coordinate a divalent metal cation. Residues 234–257 are disordered; the sequence is VSPLTAPHPTTGHEGLAGLAEKYQ.

The protein belongs to the SurE nucleotidase family. A divalent metal cation serves as cofactor.

It is found in the cytoplasm. It carries out the reaction a ribonucleoside 5'-phosphate + H2O = a ribonucleoside + phosphate. Functionally, nucleotidase that shows phosphatase activity on nucleoside 5'-monophosphates. The polypeptide is 5'-nucleotidase SurE (Natronomonas pharaonis (strain ATCC 35678 / DSM 2160 / CIP 103997 / JCM 8858 / NBRC 14720 / NCIMB 2260 / Gabara) (Halobacterium pharaonis)).